Reading from the N-terminus, the 127-residue chain is Small ribosomal subunit protein uS13 (127 aa).

The disordered stretch occupies residues 95-127 (GLPLRGQRTKTNARTRRGKKGAAIGGKKKATKK).

Belongs to the universal ribosomal protein uS13 family. Part of the 30S ribosomal subunit. Forms a loose heterodimer with protein S19. Forms two bridges to the 50S subunit in the 70S ribosome.

Functionally, located at the top of the head of the 30S subunit, it contacts several helices of the 16S rRNA. In the 70S ribosome it contacts the 23S rRNA (bridge B1a) and protein L5 of the 50S subunit (bridge B1b), connecting the 2 subunits; these bridges are implicated in subunit movement. Contacts the tRNAs in the A and P-sites. This Herpetosiphon aurantiacus (strain ATCC 23779 / DSM 785 / 114-95) protein is Small ribosomal subunit protein uS13.